Reading from the N-terminus, the 233-residue chain is Ciliary microtubule inner protein 6 (233 aa).

2 stretches are compositionally biased toward basic and acidic residues: residues 1-14 and 21-33; these read MEGE…KTED and AERK…EKSP. Positions 1 to 45 are disordered; it reads MEGEEKQQQHKTEDDGIACVAERKVEIKNEKSPGKSTQHPKPCVD. The interval 127-159 is mn; the sequence is GIVPLTSLDVSGEHENNFVEYISFIHQYDARRT. Residues 192-233 form a disordered region; it reads LLNTLESGSSEQPQKTDKGNSSGDKVTSPGLCQQNSQELLET. The span at 195 to 233 shows a compositional bias: polar residues; that stretch reads TLESGSSEQPQKTDKGNSSGDKVTSPGLCQQNSQELLET.

It localises to the cell projection. It is found in the cilium. This Mus musculus (Mouse) protein is Ciliary microtubule inner protein 6 (Cimip6).